The sequence spans 31 residues: Mycofactocin precursor peptide (31 aa).

The protein belongs to the mycofactocin precursor peptide family. Post-translationally, the post-translational modifications that lead to mycofactocin involve oxidative decarboxylation of the C-terminal tyrosine residue catalyzed by MftC, introduction of a tyramine-valine cross-link, removal of the modified C-terminal dipeptide by MftE. The released dipeptide then undergoes oxidative deamination by MftD, glycosylation by MftF and methylation by an unknown enzyme.

Functionally, precursor peptide that leads to mycofactocin (MFT) after extensive post-translational modifications by enzymes encoded by adjacent genes. Mycofactocin acts as a redox cofactor of nicotinamide-dependent oxidoreductases encoded in the same locus. Is required for the in vivo ethanol assimilation in M.smegmatis. The protein is Mycofactocin precursor peptide of Mycolicibacterium smegmatis (strain ATCC 700084 / mc(2)155) (Mycobacterium smegmatis).